The following is a 207-amino-acid chain: Large ribosomal subunit protein uL4 (207 aa).

Residues 49 to 79 are disordered; that stretch reads HKVKSRGEVSGGGKKPWRQKGTGRARAGTSR.

The protein belongs to the universal ribosomal protein uL4 family. In terms of assembly, part of the 50S ribosomal subunit.

Its function is as follows. One of the primary rRNA binding proteins, this protein initially binds near the 5'-end of the 23S rRNA. It is important during the early stages of 50S assembly. It makes multiple contacts with different domains of the 23S rRNA in the assembled 50S subunit and ribosome. Functionally, forms part of the polypeptide exit tunnel. This chain is Large ribosomal subunit protein uL4, found in Heliobacterium modesticaldum (strain ATCC 51547 / Ice1).